The primary structure comprises 150 residues: 3-hydroxyacyl-[acyl-carrier-protein] dehydratase FabZ (150 aa).

The active site involves histidine 47.

Belongs to the thioester dehydratase family. FabZ subfamily.

It localises to the cytoplasm. It catalyses the reaction a (3R)-hydroxyacyl-[ACP] = a (2E)-enoyl-[ACP] + H2O. Involved in unsaturated fatty acids biosynthesis. Catalyzes the dehydration of short chain beta-hydroxyacyl-ACPs and long chain saturated and unsaturated beta-hydroxyacyl-ACPs. The sequence is that of 3-hydroxyacyl-[acyl-carrier-protein] dehydratase FabZ from Verminephrobacter eiseniae (strain EF01-2).